The following is a 185-amino-acid chain: Sulfopyruvate decarboxylase subunit beta (185 aa).

It belongs to the TPP enzyme family. As to quaternary structure, heterododecamer composed of 6 subunits alpha and 6 subunits beta. Thiamine diphosphate is required as a cofactor.

It catalyses the reaction 3-sulfopyruvate + H(+) = sulfoacetaldehyde + CO2. It participates in cofactor biosynthesis; coenzyme M biosynthesis; sulfoacetaldehyde from phosphoenolpyruvate and sulfite: step 4/4. In terms of biological role, involved in the biosynthesis of the coenzyme M (2-mercaptoethanesulfonic acid). Catalyzes the decarboxylation of sulfopyruvate to sulfoacetaldehyde. The sequence is that of Sulfopyruvate decarboxylase subunit beta from Methanococcus maripaludis (strain DSM 14266 / JCM 13030 / NBRC 101832 / S2 / LL).